We begin with the raw amino-acid sequence, 702 residues long: K(+)-insensitive pyrophosphate-energized proton pump (702 aa).

The next 4 membrane-spanning stretches (helical) occupy residues 3–23 (GIYL…ALTI), 63–83 (AVVF…GFLI), 130–150 (MLVA…LVGI), and 162–182 (VALG…GGIF). Lys-184 serves as a coordination point for substrate. Residues Asp-187, Asp-191, Asn-214, and Asp-217 each contribute to the Mg(2+) site. The next 6 helical transmembrane spans lie at 234–254 (AVTV…VPAM), 255–275 (TSMM…SILG), 294–314 (GFLV…AIVP), 329–349 (GFDL…LIWV), 379–399 (GLAI…AAII), and 407–427 (LFGI…VVAL). Residue Asp-435 coordinates Mg(2+). 4 consecutive transmembrane segments (helical) span residues 466-486 (AVTK…LFAA), 517-537 (YVVV…SMGM), 586-606 (IIPS…ILGI), and 612-632 (AFSA…FVAI). Residues Asp-642, Asp-668, and Asp-672 each contribute to the Ca(2+) site. Lys-675 provides a ligand contact to substrate.

This sequence belongs to the H(+)-translocating pyrophosphatase (TC 3.A.10) family. K(+)-insensitive subfamily. As to quaternary structure, homodimer. Mg(2+) serves as cofactor.

It is found in the cell inner membrane. It catalyses the reaction diphosphate + H2O + H(+)(in) = 2 phosphate + 2 H(+)(out). Proton pump that utilizes the energy of pyrophosphate hydrolysis as the driving force for proton movement across the membrane. Generates a proton motive force. In Rhodospirillum rubrum (strain ATCC 11170 / ATH 1.1.1 / DSM 467 / LMG 4362 / NCIMB 8255 / S1), this protein is K(+)-insensitive pyrophosphate-energized proton pump.